Reading from the N-terminus, the 104-residue chain is MVSGMSTEEEKEGTNDEEVSEEREVEETSEEEFPKLSIQDIELLMKNTEIWDNLLNGKISVDEAKRLFEDNYKDYEKRDSRRKAKKAASKKVKKTKKKEKSVEG.

Disordered regions lie at residues M1 to P34 and E76 to G104. Residues T7–E31 show a composition bias toward acidic residues. Residue E32 participates in DNA binding. Basic residues predominate over residues S80–G104. A required to bind DNA region spans residues R81 to G104.

The protein belongs to the archaeal Rpo13 RNA polymerase subunit family. In terms of assembly, part of the 13-subunit RNA polymerase complex. Rpo1N and Rpo5 form a cleft which docks Rpo13. Forms predominantly dimers in solution, although monomers and trimers can also be seen. Found associated with RNAP but also as a homodimer pool in the cytoplasm in vivo.

The protein resides in the cytoplasm. It carries out the reaction RNA(n) + a ribonucleoside 5'-triphosphate = RNA(n+1) + diphosphate. In terms of biological role, DNA-dependent RNA polymerase (RNAP) catalyzes the transcription of DNA into RNA using the four ribonucleoside triphosphates as substrates. A molten-globule protein, it binds dsDNA in the RNAP, in vitro binds dsDNA but not ssDNA. Its position in RNAP implies it functions in both transcription initiation and elongation. The protein is DNA-directed RNA polymerase subunit Rpo13 of Saccharolobus shibatae (strain ATCC 51178 / DSM 5389 / JCM 8931 / NBRC 15437 / B12) (Sulfolobus shibatae).